The chain runs to 81 residues: Sulfur carrier protein TusA (81 aa).

Cys19 acts as the Cysteine persulfide intermediate in catalysis.

Belongs to the sulfur carrier protein TusA family.

It is found in the cytoplasm. In terms of biological role, sulfur carrier protein which probably makes part of a sulfur-relay system. The sequence is that of Sulfur carrier protein TusA from Shewanella piezotolerans (strain WP3 / JCM 13877).